Reading from the N-terminus, the 160-residue chain is Fimbrial protein (160 aa).

A propeptide spans 1–7 (MKSLQKG) (leader sequence). Phe8 is modified (N-methylphenylalanine). Residues 8–28 (FTLIELMIVVAIIGILAAFAI) traverse the membrane as a helical segment.

The protein belongs to the N-Me-Phe pilin family. As to quaternary structure, the pili are polar flexible filaments of about 5.4 nanometers diameter and 2.5 micrometers average length; they consist of only a single polypeptide chain arranged in a helical configuration of five subunits per turn in the assembled pilus.

It localises to the fimbrium. Its subcellular location is the membrane. The polypeptide is Fimbrial protein (fimA) (Dichelobacter nodosus (Bacteroides nodosus)).